The chain runs to 194 residues: Ion-translocating oxidoreductase complex subunit A (194 aa).

6 helical membrane passes run 1–21 (MVMH…FILV), 48–68 (CVIV…LIPF), 73–93 (LCTM…EIIV), 103–123 (LLGI…IPLM), 135–155 (VLYG…FSSI), and 172–192 (PIAL…DGLI).

Belongs to the NqrDE/RnfAE family. The complex is composed of six subunits: RnfA, RnfB, RnfC, RnfD, RnfE and RnfG.

It localises to the cell inner membrane. In terms of biological role, part of a membrane-bound complex that couples electron transfer with translocation of ions across the membrane. This chain is Ion-translocating oxidoreductase complex subunit A, found in Buchnera aphidicola subsp. Baizongia pistaciae (strain Bp).